Here is a 397-residue protein sequence, read N- to C-terminus: MKRVIILMMDSFGIGGAADAAKFGDEGANTLASVAKLNNGLKIPNLISLGLVKAAEASAGVKIETGPQPPAQVNIPSKYGFMREQSHGKDTLSGHWEMAGVPVLFDWGYFKPGYPSFPKELIEQICKEAGIDKILGNKAASGTEILEELGEEHIKTGKPICYTSADSVFQIAAHEKHFGLERLYTICEIAFKYLKPYKIARVIARPFEGERKGEFKRTKNRHDYAVKPPAPTVLDFLKENGGNVISIGKINDIYAKQGITKAVKASGLEELWNTTIEETKNASGNSIIFTNFVDFDMVWGHRRDFKGYAGGLEYFDSRLPELANILQEGDLVFITADHGCDPSYKGTDHTRENVPAIMFGKNVKNGFIGGRETYSDLGQTVAEYLGITKLNNGTSFL.

Residues aspartate 10, aspartate 296, histidine 301, aspartate 337, histidine 338, and histidine 349 each contribute to the Mn(2+) site.

This sequence belongs to the phosphopentomutase family. The cofactor is Mn(2+).

It localises to the cytoplasm. The enzyme catalyses 2-deoxy-alpha-D-ribose 1-phosphate = 2-deoxy-D-ribose 5-phosphate. It carries out the reaction alpha-D-ribose 1-phosphate = D-ribose 5-phosphate. The protein operates within carbohydrate degradation; 2-deoxy-D-ribose 1-phosphate degradation; D-glyceraldehyde 3-phosphate and acetaldehyde from 2-deoxy-alpha-D-ribose 1-phosphate: step 1/2. Functionally, isomerase that catalyzes the conversion of deoxy-ribose 1-phosphate (dRib-1-P) and ribose 1-phosphate (Rib-1-P) to deoxy-ribose 5-phosphate (dRib-5-P) and ribose 5-phosphate (Rib-5-P), respectively. The chain is Phosphopentomutase from Elusimicrobium minutum (strain Pei191).